A 445-amino-acid chain; its full sequence is Gamma-glutamyl phosphate reductase (445 aa).

This sequence belongs to the gamma-glutamyl phosphate reductase family.

Its subcellular location is the cytoplasm. It catalyses the reaction L-glutamate 5-semialdehyde + phosphate + NADP(+) = L-glutamyl 5-phosphate + NADPH + H(+). Its pathway is amino-acid biosynthesis; L-proline biosynthesis; L-glutamate 5-semialdehyde from L-glutamate: step 2/2. Its function is as follows. Catalyzes the NADPH-dependent reduction of L-glutamate 5-phosphate into L-glutamate 5-semialdehyde and phosphate. The product spontaneously undergoes cyclization to form 1-pyrroline-5-carboxylate. In Synechococcus sp. (strain RCC307), this protein is Gamma-glutamyl phosphate reductase.